We begin with the raw amino-acid sequence, 95 residues long: Large ribosomal subunit protein bL27 (95 aa).

The interval 1-24 is disordered; sequence MAHKKGTGSTRNGRDSNSQRLGVK. A compositionally biased stretch (polar residues) spans 7-20; the sequence is TGSTRNGRDSNSQR.

Belongs to the bacterial ribosomal protein bL27 family.

The polypeptide is Large ribosomal subunit protein bL27 (Trichodesmium erythraeum (strain IMS101)).